The following is a 420-amino-acid chain: E3 ubiquitin protein ligase DRIP2 (420 aa).

The segment at 20-61 (CPLCDKLLRDATTISECLHTFCRKCIYEKITEDEIESCPVCD) adopts an RING-type zinc-finger fold. Positions 113–123 (ISSLVVSTPRV) are enriched in polar residues. Disordered stretches follow at residues 113–201 (ISSL…KDVD) and 226–289 (DPKS…TFGD). A compositionally biased stretch (basic and acidic residues) spans 154 to 165 (KKEEEFGDDHVE). Polar residues-rich tracts occupy residues 166–194 (SASSPETLKKFTQNKRQSSYANPNQSLSN) and 232–242 (GNASHNDVQGS). The span at 244-253 (TKTKDHKRKC) shows a compositional bias: basic residues. Polar residues predominate over residues 260–273 (SNNGDPTTSETATL). Residues 274 to 284 (KRTRRTRRKRS) show a composition bias toward basic residues.

In terms of assembly, interacts with DREB2A. Post-translationally, auto-ubiquitinated. In terms of tissue distribution, expressed in roots, leaves and flowers.

It carries out the reaction S-ubiquitinyl-[E2 ubiquitin-conjugating enzyme]-L-cysteine + [acceptor protein]-L-lysine = [E2 ubiquitin-conjugating enzyme]-L-cysteine + N(6)-ubiquitinyl-[acceptor protein]-L-lysine.. It functions in the pathway protein modification; protein ubiquitination. In terms of biological role, E3 ubiquitin-protein ligase that acts as a negative regulator of the response to water stress. Mediates ubiquitination and subsequent proteasomal degradation of the drought-induced transcriptional activator DREB2A. Functionally redundant with DRIP1. This chain is E3 ubiquitin protein ligase DRIP2 (DRIP2), found in Arabidopsis thaliana (Mouse-ear cress).